Reading from the N-terminus, the 433-residue chain is Tol-Pal system protein TolB (433 aa).

The signal sequence occupies residues methionine 1 to alanine 21.

This sequence belongs to the TolB family. In terms of assembly, the Tol-Pal system is composed of five core proteins: the inner membrane proteins TolA, TolQ and TolR, the periplasmic protein TolB and the outer membrane protein Pal. They form a network linking the inner and outer membranes and the peptidoglycan layer.

It is found in the periplasm. In terms of biological role, part of the Tol-Pal system, which plays a role in outer membrane invagination during cell division and is important for maintaining outer membrane integrity. In Pseudomonas fluorescens (strain SBW25), this protein is Tol-Pal system protein TolB.